Consider the following 114-residue polypeptide: Iron-sulfur cluster insertion protein ErpA (114 aa).

Iron-sulfur cluster is bound by residues C42, C106, and C108.

Belongs to the HesB/IscA family. As to quaternary structure, homodimer. Iron-sulfur cluster is required as a cofactor.

In terms of biological role, required for insertion of 4Fe-4S clusters for at least IspG. The protein is Iron-sulfur cluster insertion protein ErpA of Enterobacter sp. (strain 638).